Reading from the N-terminus, the 252-residue chain is Imidazole glycerol phosphate synthase subunit HisF (252 aa).

Residues D11 and D130 contribute to the active site.

It belongs to the HisA/HisF family. Heterodimer of HisH and HisF.

The protein localises to the cytoplasm. The catalysed reaction is 5-[(5-phospho-1-deoxy-D-ribulos-1-ylimino)methylamino]-1-(5-phospho-beta-D-ribosyl)imidazole-4-carboxamide + L-glutamine = D-erythro-1-(imidazol-4-yl)glycerol 3-phosphate + 5-amino-1-(5-phospho-beta-D-ribosyl)imidazole-4-carboxamide + L-glutamate + H(+). The protein operates within amino-acid biosynthesis; L-histidine biosynthesis; L-histidine from 5-phospho-alpha-D-ribose 1-diphosphate: step 5/9. Functionally, IGPS catalyzes the conversion of PRFAR and glutamine to IGP, AICAR and glutamate. The HisF subunit catalyzes the cyclization activity that produces IGP and AICAR from PRFAR using the ammonia provided by the HisH subunit. In Desulforamulus reducens (strain ATCC BAA-1160 / DSM 100696 / MI-1) (Desulfotomaculum reducens), this protein is Imidazole glycerol phosphate synthase subunit HisF.